The primary structure comprises 294 residues: Nucleotide-binding protein Maqu_2718 (294 aa).

8–15 is a binding site for ATP; it reads GRSGSGKS. Position 61–64 (61–64) interacts with GTP; it reads DARN.

It belongs to the RapZ-like family.

Displays ATPase and GTPase activities. The protein is Nucleotide-binding protein Maqu_2718 of Marinobacter nauticus (strain ATCC 700491 / DSM 11845 / VT8) (Marinobacter aquaeolei).